Here is a 477-residue protein sequence, read N- to C-terminus: PTS system glucose-specific EIICB component (477 aa).

Over 1 to 14 the chain is Cytoplasmic; it reads MFKNAFANLQKVGK. A PTS EIIC type-1 domain is found at 1–388; the sequence is MFKNAFANLQ…LDLKTPGRED (388 aa). A helical membrane pass occupies residues 15–35; it reads SLMLPVSVLPIAGILLGVGSA. The Periplasmic portion of the chain corresponds to 36–50; it reads NFSWLPAVVSHVMAE. A helical membrane pass occupies residues 51-71; it reads AGGSVFANMPLIFAIGVALGF. At 72–79 the chain is on the cytoplasmic side; sequence TNNDGVSA. Residues 80–100 form a helical membrane-spanning segment; it reads LAAVVAYGIMVKTMAVVAPLV. At 101–111 the chain is on the periplasmic side; that stretch reads LHLPAEEIASK. Residues 112–132 traverse the membrane as a helical segment; the sequence is HLADTGVLGGIISGAIAAYMF. Over 133–151 the chain is Cytoplasmic; that stretch reads NRFYRIKLPEYLGFFAGKR. Residues 152–172 form a helical membrane-spanning segment; that stretch reads FVPIISGLAAIFTGVVLSFIW. Residues 173–190 lie on the Periplasmic side of the membrane; sequence PPIGSAIQTFSQWAAYQN. Residues 191–211 traverse the membrane as a helical segment; the sequence is PVVAFGIYGFIERCLVPFGLH. At 212 to 249 the chain is on the cytoplasmic side; the sequence is HIWNVPFQMQIGEYTNAAGQVFHGDIPRYMAGDPTAGK. A helical transmembrane segment spans residues 250–270; sequence LSGGFLFKMYGLPAAAIAIWH. Over 271 to 279 the chain is Periplasmic; that stretch reads SAKPENRAK. Residues 280–300 form a helical membrane-spanning segment; that stretch reads VGGIMISAALTSFLTGITEPI. Residues 301–309 are Cytoplasmic-facing; the sequence is EFSFMFVAP. A helical membrane pass occupies residues 310 to 330; the sequence is ILYIIHAILAGLAFPICILLG. Over 331-355 the chain is Periplasmic; that stretch reads MRDGTSFSHGLIDFIVLSGNSSKLW. The chain crosses the membrane as a helical span at residues 356–376; that stretch reads LFPIVGIGYAIVYYTIFRVLI. The Cytoplasmic segment spans residues 377–477; it reads KALDLKTPGR…TEMDEYIRNH (101 aa). A PTS EIIB type-1 domain is found at 399 to 477; it reads SEMAPALVAA…TEMDEYIRNH (79 aa). The Phosphocysteinsyse intermediate; for EIIB activity role is filled by cysteine 421. Cysteine 421 carries the phosphocysteine modification.

The protein resides in the cell inner membrane. The enzyme catalyses N(pros)-phospho-L-histidyl-[protein] + D-glucose(out) = D-glucose 6-phosphate(in) + L-histidyl-[protein]. In terms of biological role, the phosphoenolpyruvate-dependent sugar phosphotransferase system (sugar PTS), a major carbohydrate active transport system, catalyzes the phosphorylation of incoming sugar substrates concomitantly with their translocation across the cell membrane. The enzyme II complex composed of PtsG and Crr is involved in glucose transport. Also functions as a chemoreceptor monitoring the environment for changes in sugar concentration. The sequence is that of PTS system glucose-specific EIICB component (ptsG) from Escherichia coli O6:H1 (strain CFT073 / ATCC 700928 / UPEC).